The primary structure comprises 213 residues: ATP phosphoribosyltransferase (213 aa).

The protein belongs to the ATP phosphoribosyltransferase family. Short subfamily. Heteromultimer composed of HisG and HisZ subunits.

The protein resides in the cytoplasm. It carries out the reaction 1-(5-phospho-beta-D-ribosyl)-ATP + diphosphate = 5-phospho-alpha-D-ribose 1-diphosphate + ATP. Its pathway is amino-acid biosynthesis; L-histidine biosynthesis; L-histidine from 5-phospho-alpha-D-ribose 1-diphosphate: step 1/9. In terms of biological role, catalyzes the condensation of ATP and 5-phosphoribose 1-diphosphate to form N'-(5'-phosphoribosyl)-ATP (PR-ATP). Has a crucial role in the pathway because the rate of histidine biosynthesis seems to be controlled primarily by regulation of HisG enzymatic activity. The polypeptide is ATP phosphoribosyltransferase (Listeria welshimeri serovar 6b (strain ATCC 35897 / DSM 20650 / CCUG 15529 / CIP 8149 / NCTC 11857 / SLCC 5334 / V8)).